The following is an 817-amino-acid chain: Transcription factor yanR (817 aa).

The segment at residues 19–46 (CIVCRRRKVRCGREHPECANCVRMKENC) is a DNA-binding region (zn(2)-C6 fungal-type). 3 disordered regions span residues 102–161 (GNVL…PQVD), 180–218 (HHASSRAGTSRTSSVSQDASPAVSESARAPSTSTSYSGL), and 733–775 (SLSS…VADS). Positions 113-127 (LPRPTISPASAPPPQ) are enriched in pro residues. Over residues 146–158 (SSTILTPAPSSHP) the composition is skewed to polar residues. A compositionally biased stretch (low complexity) spans 184-195 (SRAGTSRTSSVS). 2 stretches are compositionally biased toward polar residues: residues 208–217 (APSTSTSYSG) and 748–760 (EAPSTTTAPQMPS).

It localises to the nucleus. Its function is as follows. Transcription factor that regulates the expression of the gene cluster that mediates the biosynthesis of yanuthone D, a fungal isoprenoid epoxycyclohexenone that acts as an antibiotic against fungi and bacteria. The protein is Transcription factor yanR of Aspergillus niger (strain ATCC 1015 / CBS 113.46 / FGSC A1144 / LSHB Ac4 / NCTC 3858a / NRRL 328 / USDA 3528.7).